The primary structure comprises 268 residues: tRNA pseudouridine synthase A (268 aa).

Catalysis depends on Asp-52, which acts as the Nucleophile. A substrate-binding site is contributed by Tyr-113.

Belongs to the tRNA pseudouridine synthase TruA family. In terms of assembly, homodimer.

The enzyme catalyses uridine(38/39/40) in tRNA = pseudouridine(38/39/40) in tRNA. Functionally, formation of pseudouridine at positions 38, 39 and 40 in the anticodon stem and loop of transfer RNAs. This is tRNA pseudouridine synthase A from Chlamydia abortus (strain DSM 27085 / S26/3) (Chlamydophila abortus).